Reading from the N-terminus, the 417-residue chain is Calreticulin (417 aa).

The N-terminal stretch at 1–17 (MLLSVPLLLGLLGLAVA) is a signal peptide. The N-domain stretch occupies residues 18–197 (EPAVYFKEQF…NSQVESGSLE (180 aa)). A Ca(2+)-binding site is contributed by Gln-26. Lys-48 bears the N6-acetyllysine mark. Residues Lys-62 and Lys-64 each contribute to the Ca(2+) site. Residue Lys-64 is modified to N6-(2-hydroxyisobutyryl)lysine. Cysteines 105 and 137 form a disulfide. Positions 109, 111, 128, and 135 each coordinate an alpha-D-glucoside. At Lys-159 the chain carries N6-acetyllysine. One copy of the 1-1 repeat lies at 191–202 (VESGSLEDDWDF). Residues 191–255 (VESGSLEDDW…DAKKPEDWDE (65 aa)) are 4 X approximate repeats. The tract at residues 193–278 (SGSLEDDWDF…PEYKGEWKPR (86 aa)) is disordered. Positions 198 to 308 (DDWDFLPPKK…YSPDPSIYAY (111 aa)) are P-domain. Over residues 207–251 (KIKDPDASKPEDWDERAKIDDPTDSKPEDWDKPEHIPDPDAKKPE) the composition is skewed to basic and acidic residues. Position 209 is an N6-acetyllysine (Lys-209). 6 tandem repeats follow at residues 210–221 (DPDASKPEDWDE), 227–238 (DPTDSKPEDWDK), 244–255 (DPDAKKPEDWDE), 259–269 (GEWEPPVIQNP), 273–283 (GEWKPRQIDNP), and 287–297 (GTWIHPEIDNP). The tract at residues 237 to 270 (DKPEHIPDPDAKKPEDWDEEMDGEWEPPVIQNPE) is interaction with PPIB. The span at 252-261 (DWDEEMDGEW) shows a compositional bias: acidic residues. A 3 X approximate repeats region spans residues 259–297 (GEWEPPVIQNPEYKGEWKPRQIDNPDYKGTWIHPEIDNP). Residues 309-417 (DNFGVLGLDL…DVPGQAKDEL (109 aa)) form a C-domain region. An an alpha-D-glucoside-binding site is contributed by Asp-317. Asp-328 contacts Ca(2+). Residue Asn-344 is glycosylated (N-linked (GlcNAc...) asparagine). Positions 350-417 (TKAAEKQMKD…DVPGQAKDEL (68 aa)) are disordered. A compositionally biased stretch (basic and acidic residues) spans 352-379 (AAEKQMKDKQDEEQRLKEEEEDKKRKEE). Residues 380–409 (EEAEDKEDDEDKDEDEEDEEDKEEDEEEDV) show a composition bias toward acidic residues. The Prevents secretion from ER motif lies at 414 to 417 (KDEL).

Belongs to the calreticulin family. In terms of assembly, monomer. Component of an EIF2 complex at least composed of CELF1/CUGBP1, CALR, CALR3, EIF2S1, EIF2S2, HSP90B1 and HSPA5. Interacts with PDIA3/ERp57 and SPACA9. Interacts with TRIM21. Interacts with NR3C1. Interacts with PPIB. Interacts (via P-domain) with PDIA5. Interacts with GABARAP. Interacts with HLA-E-B2M and HLA-G-B2M complexes. Interacts with HLA-F. Interacts with CLCC1.

It localises to the endoplasmic reticulum lumen. The protein localises to the cytoplasm. It is found in the cytosol. The protein resides in the secreted. Its subcellular location is the extracellular space. It localises to the extracellular matrix. The protein localises to the cell surface. It is found in the sarcoplasmic reticulum lumen. The protein resides in the cytoplasmic vesicle. Its subcellular location is the secretory vesicle. It localises to the cortical granule. The protein localises to the cytolytic granule. Its function is as follows. Calcium-binding chaperone that promotes folding, oligomeric assembly and quality control in the endoplasmic reticulum (ER) via the calreticulin/calnexin cycle. This lectin interacts transiently with almost all of the monoglucosylated glycoproteins that are synthesized in the ER. Interacts with the DNA-binding domain of NR3C1 and mediates its nuclear export. Involved in maternal gene expression regulation. May participate in oocyte maturation via the regulation of calcium homeostasis. Present in the cortical granules of non-activated oocytes, is exocytosed during the cortical reaction in response to oocyte activation and might participate in the block to polyspermy. This Homo sapiens (Human) protein is Calreticulin.